Reading from the N-terminus, the 254-residue chain is Hydroxyacylglutathione hydrolase (254 aa).

Zn(2+) contacts are provided by His-53, His-55, Asp-57, His-58, His-111, Asp-128, and His-166.

This sequence belongs to the metallo-beta-lactamase superfamily. Glyoxalase II family. As to quaternary structure, monomer. Zn(2+) is required as a cofactor.

It carries out the reaction an S-(2-hydroxyacyl)glutathione + H2O = a 2-hydroxy carboxylate + glutathione + H(+). The protein operates within secondary metabolite metabolism; methylglyoxal degradation; (R)-lactate from methylglyoxal: step 2/2. Its function is as follows. Thiolesterase that catalyzes the hydrolysis of S-D-lactoyl-glutathione to form glutathione and D-lactic acid. In Aeromonas hydrophila subsp. hydrophila (strain ATCC 7966 / DSM 30187 / BCRC 13018 / CCUG 14551 / JCM 1027 / KCTC 2358 / NCIMB 9240 / NCTC 8049), this protein is Hydroxyacylglutathione hydrolase.